The chain runs to 208 residues: Large ribosomal subunit protein uL3 (208 aa).

The interval 117–149 (GFQGAIKRHGQSRGPMAHGSRYHRRPGSMGPVA) is disordered.

The protein belongs to the universal ribosomal protein uL3 family. In terms of assembly, part of the 50S ribosomal subunit. Forms a cluster with proteins L14 and L19.

One of the primary rRNA binding proteins, it binds directly near the 3'-end of the 23S rRNA, where it nucleates assembly of the 50S subunit. The protein is Large ribosomal subunit protein uL3 of Exiguobacterium sp. (strain ATCC BAA-1283 / AT1b).